A 382-amino-acid polypeptide reads, in one-letter code: Succinate--CoA ligase [ADP-forming] subunit beta (382 aa).

The 229-residue stretch at 9–237 folds into the ATP-grasp domain; the sequence is RDLLARYGIP…PSAEPEAERR (229 aa). ATP is bound by residues K45, 52–54, I94, and E99; that span reads GRG. Residues N192 and D206 each coordinate Mg(2+). Residues N257 and 314 to 316 each bind substrate; that span reads GIT.

It belongs to the succinate/malate CoA ligase beta subunit family. Heterotetramer of two alpha and two beta subunits. Requires Mg(2+) as cofactor.

The enzyme catalyses succinate + ATP + CoA = succinyl-CoA + ADP + phosphate. It catalyses the reaction GTP + succinate + CoA = succinyl-CoA + GDP + phosphate. Its pathway is carbohydrate metabolism; tricarboxylic acid cycle; succinate from succinyl-CoA (ligase route): step 1/1. In terms of biological role, succinyl-CoA synthetase functions in the citric acid cycle (TCA), coupling the hydrolysis of succinyl-CoA to the synthesis of either ATP or GTP and thus represents the only step of substrate-level phosphorylation in the TCA. The beta subunit provides nucleotide specificity of the enzyme and binds the substrate succinate, while the binding sites for coenzyme A and phosphate are found in the alpha subunit. The chain is Succinate--CoA ligase [ADP-forming] subunit beta from Chloroflexus aggregans (strain MD-66 / DSM 9485).